The primary structure comprises 173 residues: NADH-quinone oxidoreductase subunit I 2 (173 aa).

4Fe-4S ferredoxin-type domains lie at 41 to 73 (IVLTRDPDGQERCVACNLCATVCPVGCIDLAKA) and 83 to 112 (EYFRVNFARCIFCGFCEDACPTAAIQLTPD). Positions 53, 56, 59, 63, 92, 95, 98, and 102 each coordinate [4Fe-4S] cluster. Residues 153–163 (GKDKGEAEHEA) are compositionally biased toward basic and acidic residues. Residues 153–173 (GKDKGEAEHEAPPVNLKGLLP) are disordered.

This sequence belongs to the complex I 23 kDa subunit family. As to quaternary structure, NDH-1 is composed of 14 different subunits. Subunits NuoA, H, J, K, L, M, N constitute the membrane sector of the complex. The cofactor is [4Fe-4S] cluster.

The protein localises to the cell inner membrane. The enzyme catalyses a quinone + NADH + 5 H(+)(in) = a quinol + NAD(+) + 4 H(+)(out). Functionally, NDH-1 shuttles electrons from NADH, via FMN and iron-sulfur (Fe-S) centers, to quinones in the respiratory chain. The immediate electron acceptor for the enzyme in this species is believed to be ubiquinone. Couples the redox reaction to proton translocation (for every two electrons transferred, four hydrogen ions are translocated across the cytoplasmic membrane), and thus conserves the redox energy in a proton gradient. This chain is NADH-quinone oxidoreductase subunit I 2, found in Rhodopseudomonas palustris (strain ATCC BAA-98 / CGA009).